Reading from the N-terminus, the 130-residue chain is Fluoride-specific ion channel FluC (130 aa).

The next 4 helical transmembrane spans lie at 3–23, 38–58, 67–87, and 102–122; these read FVFL…YFVG, LGTF…GHLA, FGIF…SYGL, and ISYV…GWFL. G77 and T80 together coordinate Na(+).

The protein belongs to the fluoride channel Fluc/FEX (TC 1.A.43) family.

It localises to the cell inner membrane. It catalyses the reaction fluoride(in) = fluoride(out). Na(+) is not transported, but it plays an essential structural role and its presence is essential for fluoride channel function. Its function is as follows. Fluoride-specific ion channel. Important for reducing fluoride concentration in the cell, thus reducing its toxicity. The sequence is that of Fluoride-specific ion channel FluC from Helicobacter pylori (strain G27).